Consider the following 469-residue polypeptide: Mitochondrial adenyl nucleotide antiporter SLC25A25 (469 aa).

A regulatory N-terminal domain region spans residues 1–165 (MLCLCLYVPI…LYWKHSTIFD (165 aa)). At 1–189 (MLCLCLYVPI…ERQTGMWWRH (189 aa)) the chain is on the mitochondrial intermembrane side. EF-hand domains lie at 47–80 (TYRQ…QDHE), 78–113 (DHEK…LGVK), and 114–149 (ISEQ…HPVE). Ca(2+) contacts are provided by aspartate 60, aspartate 62, aspartate 64, glutamine 66, and glutamate 71. Residues 151–160 (IPEIILYWKH) are linker region. Residues 166–469 (VGENLTVPDE…LKITLGVQSR (304 aa)) are C-terminal transmembrane transporter domain. Solcar repeat units follow at residues 184–270 (GMWW…MKRL), 278–363 (LRIH…LKNT), and 375–463 (PGVF…LKIT). The chain crosses the membrane as a helical span at residues 190 to 207 (LVAGGGAGAVSRTCTAPL). At 208-244 (DRLKVLMQVHASRSNNMCIVGGFTQMIREGGAKSLWR) the chain is on the mitochondrial matrix side. Residues 245 to 264 (GNGINVLKIAPESAIKFMAY) traverse the membrane as a helical segment. Residues 265–287 (EQMKRLVGSDQETLRIHERLVAG) lie on the Mitochondrial intermembrane side of the membrane. Residues 288 to 301 (SLAGAIAQSSIYPM) form a helical membrane-spanning segment. Topologically, residues 302–337 (EVLKTRMALRKTGQYSGMLDCARRILAKEGVAAFYK) are mitochondrial matrix. A helical transmembrane segment spans residues 338 to 357 (GYIPNMLGIIPYAGIDLAVY). Residues 358 to 380 (ETLKNTWLQRYAVNSADPGVFVL) lie on the Mitochondrial intermembrane side of the membrane. Residues 381–398 (LACGTISSTCGQLASYPL) form a helical membrane-spanning segment. Residues 399-437 (ALVRTRMQAQASIEGAPEVTMSSLFKQILRTEGAFGLYR) are Mitochondrial matrix-facing. A helical membrane pass occupies residues 438-457 (GLAPNFMKVIPAVSISYVVY). The Mitochondrial intermembrane portion of the chain corresponds to 458 to 469 (ENLKITLGVQSR).

It belongs to the mitochondrial carrier (TC 2.A.29) family.

It is found in the mitochondrion inner membrane. It carries out the reaction Mg(2+)(out) + phosphate(in) + ATP(out) = Mg(2+)(in) + phosphate(out) + ATP(in). Its activity is regulated as follows. Activated by an increase in cytosolic calcium levels that induce a conformational change of the N-terminal regulatory domain, uncapping the channel and allowing transport. Functionally, electroneutral antiporter that most probably mediates the transport of adenyl nucleotides through the inner mitochondrial membrane. Originally identified as an ATP-magnesium/inorganic phosphate antiporter, it could have a broader specificity for adenyl nucleotides. By regulating the mitochondrial matrix adenyl nucleotide pool could adapt to changing cellular energetic demands and indirectly regulate adenyl nucleotide-dependent metabolic pathways. The polypeptide is Mitochondrial adenyl nucleotide antiporter SLC25A25 (Mus musculus (Mouse)).